Here is a 433-residue protein sequence, read N- to C-terminus: Serine/threonine-protein kinase STK11 (433 aa).

Ser31 is subject to Phosphoserine. 2 positions are modified to N6-acetyllysine: Lys44 and Lys48. Residues 45 to 90 (LIGKYLMGDLLGEGSYGKVKEVLDSETLCRRAVKILKKKKLRRIPN) form a sufficient for interaction with SIRT1 region. One can recognise a Protein kinase domain in the interval 49-309 (YLMGDLLGEG…IRQIRQHSWF (261 aa)). ATP-binding positions include 55–63 (LGEGSYGKV) and Lys78. Lys96 and Lys97 each carry N6-acetyllysine. Catalysis depends on Asp176, which acts as the Proton acceptor. Residue Thr189 is modified to Phosphothreonine; by autocatalysis. N6-acetyllysine occurs at positions 296 and 311. The tract at residues 312–331 (KHPPAEAPVPIPPSPDTKDR) is disordered. Pro residues predominate over residues 316-326 (AEAPVPIPPSP). Ser325 carries the post-translational modification Phosphoserine. Thr336 is subject to Phosphothreonine; by autocatalysis. Thr363 bears the Phosphothreonine; by ATM and autocatalysis mark. The segment at 397-433 (AAQLSTKSRAEGRAPNPARKACSASSKIRRLSACKQQ) is disordered. 2 positions are modified to phosphoserine: Gln399 and Ser401. Lys416 is modified (N6-acetyllysine). The S-palmitoyl cysteine moiety is linked to residue Cys418. Position 423 is an N6-acetyllysine (Lys423). Residues 423–433 (KIRRLSACKQQ) show a composition bias toward basic residues. Ser428 is subject to Phosphoserine; by autocatalysis, PKA, PKC/PRKCZ and RPS6KA1. The residue at position 430 (Cys430) is a Cysteine methyl ester. A lipid anchor (S-farnesyl cysteine) is attached at Cys430. N6-acetyllysine is present on Lys431. Residues 431–433 (KQQ) constitute a propeptide, removed in mature form.

It belongs to the protein kinase superfamily. CAMK Ser/Thr protein kinase family. LKB1 subfamily. Catalytic component of a trimeric complex composed of STK11/LKB1, STRAD (STRADA or STRADB) and CAB39/MO25 (CAB39/MO25alpha or CAB39L/MO25beta): the complex tethers STK11/LKB1 in the cytoplasm and stimulates its catalytic activity. Found in a ternary complex composed of SMAD4, STK11/LKB1 and STK11IP. Interacts with p53/TP53, SMAD4, STK11IP and WDR6. Interacts with NR4A1. Interacts with NISCH; this interaction may increase STK11 activity. Interacts with PTEN; leading to PTEN phosphorylation. Interacts with SIRT1; the interaction deacetylates STK11. Interacts with CDKN1A. The cofactor is Mg(2+). It depends on Mn(2+) as a cofactor. In terms of processing, phosphorylated by ATM at Thr-363 following ionizing radiation (IR). Phosphorylation at Ser-428 by RPS6KA1 and/or some PKA is required to inhibit cell growth. Phosphorylation at Ser-428 is also required during neuronal polarization to mediate phosphorylation of BRSK1 and BRSK2. Phosphorylation by PKC/PRKCZ at Ser-399 in isoform 2 promotes metformin (or peroxynitrite)-induced nuclear export of STK11 and activation of AMPK. UV radiation-induced phosphorylation at Thr-363 mediates CDKN1A degradation. Acetylated. Deacetylation at Lys-48 enhances cytoplasmic localization and kinase activity in vitro. In terms of tissue distribution, ubiquitously expressed. Strongest expression in testis and fetal liver.

It is found in the nucleus. The protein resides in the cytoplasm. Its subcellular location is the membrane. It localises to the mitochondrion. The enzyme catalyses L-seryl-[protein] + ATP = O-phospho-L-seryl-[protein] + ADP + H(+). It carries out the reaction L-threonyl-[protein] + ATP = O-phospho-L-threonyl-[protein] + ADP + H(+). Its activity is regulated as follows. Activated by forming a complex with STRAD (STRADA or STRADB) and CAB39/MO25 (CAB39/MO25alpha or CAB39L/MO25beta): STRADA (or STRADB)-binding promotes a conformational change of STK11/LKB1 in an active conformation, which is stabilized by CAB39/MO25alpha (or CAB39L/MO25beta) interacting with the STK11/LKB1 activation loop. Sequestration in the nucleus by NR4A1 prevents it from phosphorylating and activating cytoplasmic AMPK. Functionally, tumor suppressor serine/threonine-protein kinase that controls the activity of AMP-activated protein kinase (AMPK) family members, thereby playing a role in various processes such as cell metabolism, cell polarity, apoptosis and DNA damage response. Acts by phosphorylating the T-loop of AMPK family proteins, thus promoting their activity: phosphorylates PRKAA1, PRKAA2, BRSK1, BRSK2, MARK1, MARK2, MARK3, MARK4, NUAK1, NUAK2, SIK1, SIK2, SIK3 and SNRK but not MELK. Also phosphorylates non-AMPK family proteins such as STRADA, PTEN and possibly p53/TP53. Acts as a key upstream regulator of AMPK by mediating phosphorylation and activation of AMPK catalytic subunits PRKAA1 and PRKAA2 and thereby regulates processes including: inhibition of signaling pathways that promote cell growth and proliferation when energy levels are low, glucose homeostasis in liver, activation of autophagy when cells undergo nutrient deprivation, and B-cell differentiation in the germinal center in response to DNA damage. Also acts as a regulator of cellular polarity by remodeling the actin cytoskeleton. Required for cortical neuron polarization by mediating phosphorylation and activation of BRSK1 and BRSK2, leading to axon initiation and specification. Involved in DNA damage response: interacts with p53/TP53 and recruited to the CDKN1A/WAF1 promoter to participate in transcription activation. Able to phosphorylate p53/TP53; the relevance of such result in vivo is however unclear and phosphorylation may be indirect and mediated by downstream STK11/LKB1 kinase NUAK1. Also acts as a mediator of p53/TP53-dependent apoptosis via interaction with p53/TP53: translocates to the mitochondrion during apoptosis and regulates p53/TP53-dependent apoptosis pathways. Regulates UV radiation-induced DNA damage response mediated by CDKN1A. In association with NUAK1, phosphorylates CDKN1A in response to UV radiation and contributes to its degradation which is necessary for optimal DNA repair. In terms of biological role, has a role in spermiogenesis. This is Serine/threonine-protein kinase STK11 from Homo sapiens (Human).